The following is a 241-amino-acid chain: Proteasome subunit alpha (241 aa).

Belongs to the peptidase T1A family. In terms of assembly, the 20S proteasome core is composed of 14 alpha and 14 beta subunits that assemble into four stacked heptameric rings, resulting in a barrel-shaped structure. The two inner rings, each composed of seven catalytic beta subunits, are sandwiched by two outer rings, each composed of seven alpha subunits. The catalytic chamber with the active sites is on the inside of the barrel. Has a gated structure, the ends of the cylinder being occluded by the N-termini of the alpha-subunits. Is capped by the proteasome-associated ATPase, ARC.

The protein resides in the cytoplasm. The protein operates within protein degradation; proteasomal Pup-dependent pathway. The formation of the proteasomal ATPase ARC-20S proteasome complex, likely via the docking of the C-termini of ARC into the intersubunit pockets in the alpha-rings, may trigger opening of the gate for substrate entry. Interconversion between the open-gate and close-gate conformations leads to a dynamic regulation of the 20S proteasome proteolysis activity. Functionally, component of the proteasome core, a large protease complex with broad specificity involved in protein degradation. This is Proteasome subunit alpha from Frankia alni (strain DSM 45986 / CECT 9034 / ACN14a).